The sequence spans 959 residues: Bifunctional premutilin synthase (959 aa).

Residues 1 to 542 (MGLSEDLHAR…ALNVPIPRFD (542 aa)) are class II diterpene cyclase. The DXDD motif motif lies at 309–312 (DADM). The active-site For class II diterpene cyclase activity is the Asp311. Positions 543 to 959 (PSSISTLPAI…TANGSNGIHH (417 aa)) are class I diterpene synthase. Asp649 serves as the catalytic For class I diterpene synthase activity. Residues Asp649, Asp653, and Asn824 each coordinate Mg(2+). The DDXXD motif motif lies at 649 to 653 (DDYLD). Positions 931 to 959 (KGTNGVKKINGSSTNGTKVTANGSNGIHH) are disordered. The segment covering 940-959 (NGSSTNGTKVTANGSNGIHH) has biased composition (polar residues).

This sequence belongs to the terpene synthase family. Mg(2+) is required as a cofactor.

It functions in the pathway secondary metabolite biosynthesis; terpenoid biosynthesis. Bifunctional premutilin synthase; part of the gene cluster that mediates the biosynthesis of pleuromutilin, a tricyclic diterpene showing antibacterial properties. The geranylgeranyl diphosphate (GGPP) synthase catalyzes the first step in pleuromutilin biosynthesis. GGPP is then substrate of the premutilin synthase (PS) to yield premutilin. Premutilin synthase is a bifunctional enzyme composed of the fusion of a class II diterpene cyclase (DTC) and a class I diterpene synthase (DTS), with the corresponding domains and active sites containing characteristic aspartate-rich motifs. GGPP is first converted to mutildienyl-diphosphate (MPP) at the class II DTC site. MPP is subsequently further cyclized at the class I DTS site, followed by a 1,5-hydride shift and addition of water prior to terminating deprotonation, to yield premutilin. In addition to the aforementioned GGPP synthase and bifunctional diterpene synthase, the cluster also contains three cytochrome P450 monooxygenases, a short-chain alcohol dehydrogenase, and an acyltransferase, involved in the conversion of premutilin to pleuromutilin. The cytochrome P450 monooxygenases P450-1 and P450-2 hydroxylate premutilin at C-11 and C-3, respectively, producing 11-hydroxypremutilin and 3-hydroxypremutilin. The combination of the actions of both ple5 and ple6 leads to the production of 3,11-dihydroxypremutilin. The short chain dehydrogenase SDR further converts 3,11-dihydroxypremutilin into mutilin. The acetyltransferase ATF then acetylates mutilin to produce 14-O-acetylmutilin. Finally, the cytochrome P450 monooxygenase P450-3 catalyzes hydroxylation on the alpha position of the acetyl side chain of 14-O-acetylmutilin to yield pleuromutilin. In Clitopilus passeckerianus (Pleurotus passeckerianus), this protein is Bifunctional premutilin synthase.